Reading from the N-terminus, the 97-residue chain is Co-chaperonin GroES (97 aa).

It belongs to the GroES chaperonin family. As to quaternary structure, heptamer of 7 subunits arranged in a ring. Interacts with the chaperonin GroEL.

It is found in the cytoplasm. In terms of biological role, together with the chaperonin GroEL, plays an essential role in assisting protein folding. The GroEL-GroES system forms a nano-cage that allows encapsulation of the non-native substrate proteins and provides a physical environment optimized to promote and accelerate protein folding. GroES binds to the apical surface of the GroEL ring, thereby capping the opening of the GroEL channel. This is Co-chaperonin GroES from Proteus mirabilis (strain HI4320).